Reading from the N-terminus, the 463-residue chain is Competence protein ComFA (463 aa).

Residues C60, C63, C84, and C87 each contribute to the Zn(2+) site. The Helicase ATP-binding domain maps to 133-285 (IEAISKKEEL…LNGQLHSVRI (153 aa)). 146–153 (AVCGAGKT) is a binding site for ATP. The short motif at 233–236 (DEVD) is the DEAD box element. The Helicase C-terminal domain occupies 317–463 (AVKRWIEFHV…ELAAKVECTD (147 aa)).

It belongs to the DEAD box helicase family. Monomer and dimer in solution. Interacts with DprA and ComFC; ComFA-ComFC form rings about 150 Angstroms in diameter with apparent 6-fold symmetry. Requires Zn(2+) as cofactor.

The protein resides in the cytoplasm. Functionally, involved in transformation (genetic competence for DNA uptake). Required for DNA uptake but not for DNA binding to cells. DNA uptake is energy dependent, this protein may provide the driving force for DNA uptake. Does not have helicase activity, translocates on single-stranded (ss)DNA in a 5'-3' direction in an ATP-dependent manner, but does not unwind double-stranded (ds)DNA. ATP hydrolysis causes the release of ssDNA from ComFA. A ssDNA-stimulated ATPase; dsDNA does not stimulate ATPase. ATP hydrolysis causes the release of ssDNA from ComFA. Binds ssDNA but only very poorly to dsDNA in the absence of ATP. Binding to ssDNA does not require free DNA ends. This Bacillus subtilis (strain 168) protein is Competence protein ComFA.